The chain runs to 134 residues: Profilin-2 (134 aa).

A disulfide bridge links cysteine 13 with cysteine 118. Positions 84 to 100 (AVIRGKKGSGGITIKKT) match the Involved in PIP2 interaction motif. Threonine 114 carries the phosphothreonine modification.

It belongs to the profilin family. Occurs in many kinds of cells as a complex with monomeric actin in a 1:1 ratio. Phosphorylated by MAP kinases.

Its subcellular location is the cytoplasm. It localises to the cytoskeleton. Functionally, binds to actin and affects the structure of the cytoskeleton. At high concentrations, profilin prevents the polymerization of actin, whereas it enhances it at low concentrations. This chain is Profilin-2, found in Olea europaea (Common olive).